A 295-amino-acid polypeptide reads, in one-letter code: CRISPR system Cmr endoribonuclease Cmr4 (295 aa).

This sequence belongs to the CRISPR system Cmr4 family. In terms of assembly, forms oligomers in isolation. Part of the type III-B Cmr ribonucleoprotein (RNP) complex, an elongated RNP with Cmr2 and Cmr3 as the base, with Cmr4 and Cmr5 forming a helical core along the mature crRNA (39 or 45 nt in length), while the complex is capped by Cmr6 and Cmr1. The 5' end of the crRNA is bound to Cmr2 and Cmr3, while Cmr6 and a Cmr1 subunit (Cmr1-1 or Cmr1-2) cap the 3' end of the crRNA. The target RNA lies anti-parallel to the crRNA, with its 5' end near Cmr1 and Cmr6 and its 3' end near Cmr2 and Cmr3; major target RNA cleavage occurs nears the junction of Cmr1/Cmr6 and Cmr4/Cmr5, with minor cleavage occurring at 6 nt intervals which coincide with the proposed spacing of Cmr4 subunits. Interacts with Cmr5. Interacts with Cmr2, Cmr3, Cmr5 and Cmr6.

Its subcellular location is the cytoplasm. CRISPR (clustered regularly interspaced short palindromic repeat), is an adaptive immune system that provides protection against mobile genetic elements (viruses, transposable elements and conjugative plasmids). CRISPR clusters contain sequences complementary to antecedent mobile elements and target invading nucleic acids. CRISPR clusters are transcribed and processed into CRISPR RNA (crRNA), formerly called psiRNA (prokaryotic silencing) in this organism. Part of the Cmr ribonucleoprotein complex which has divalent cation-dependent endoribonuclease activity specific for ssRNA complementary to the crRNA (target RNA), generating 5' hydroxy- and 3' phosphate or 2'-3' cyclic phosphate termini. This is probably the subunit that cleaves the target RNA. Cmr complex does not cleave ssDNA complementary to the crRNA. Cleavage of target RNA is guided by the crRNA; substrate cleavage occurs a fixed distance (14 nt) from the 3' end of the crRNA. In vitro reconstitution shows Cmr1-2 and Cmr5 are not absolutely necessary for target cleavage. This is CRISPR system Cmr endoribonuclease Cmr4 from Pyrococcus furiosus (strain ATCC 43587 / DSM 3638 / JCM 8422 / Vc1).